The following is a 154-amino-acid chain: SsrA-binding protein (154 aa).

The protein belongs to the SmpB family.

It is found in the cytoplasm. In terms of biological role, required for rescue of stalled ribosomes mediated by trans-translation. Binds to transfer-messenger RNA (tmRNA), required for stable association of tmRNA with ribosomes. tmRNA and SmpB together mimic tRNA shape, replacing the anticodon stem-loop with SmpB. tmRNA is encoded by the ssrA gene; the 2 termini fold to resemble tRNA(Ala) and it encodes a 'tag peptide', a short internal open reading frame. During trans-translation Ala-aminoacylated tmRNA acts like a tRNA, entering the A-site of stalled ribosomes, displacing the stalled mRNA. The ribosome then switches to translate the ORF on the tmRNA; the nascent peptide is terminated with the 'tag peptide' encoded by the tmRNA and targeted for degradation. The ribosome is freed to recommence translation, which seems to be the essential function of trans-translation. The protein is SsrA-binding protein of Staphylococcus aureus (strain Mu3 / ATCC 700698).